Reading from the N-terminus, the 163-residue chain is Large ribosomal subunit protein uL10 (163 aa).

It belongs to the universal ribosomal protein uL10 family. Part of the ribosomal stalk of the 50S ribosomal subunit. The N-terminus interacts with L11 and the large rRNA to form the base of the stalk. The C-terminus forms an elongated spine to which L12 dimers bind in a sequential fashion forming a multimeric L10(L12)X complex.

Functionally, forms part of the ribosomal stalk, playing a central role in the interaction of the ribosome with GTP-bound translation factors. The sequence is that of Large ribosomal subunit protein uL10 from Histophilus somni (strain 129Pt) (Haemophilus somnus).